The chain runs to 301 residues: Cuticle collagen 2 (301 aa).

Residues 1–37 (MDIDARIKAYKFVAYSAVTFSVVAVVSVFITLPMVYN) form the signal peptide. Triple-helical region regions lie at residues 105 to 134 (GPPG…PGKG), 153 to 176 (GPPG…PGSP), 183 to 212 (GPAG…PGAS), and 215 to 282 (GGPG…KGIC). A disordered region spans residues 109–284 (PGGSPGKPGK…GEGEKGICPK (176 aa)). 2 stretches are compositionally biased toward pro residues: residues 143–170 (TQPP…PGPD) and 179–191 (PSGP…PGPA). Gly residues predominate over residues 201–218 (GAPGGPGEPGASEQGGPG). Residues 219–229 (EPGPAGPPGPA) are compositionally biased toward pro residues. The span at 252–261 (PGAAGAPGAD) shows a compositional bias: low complexity. The segment covering 262–274 (GNPGGPGTAGKPG) has biased composition (gly residues).

This sequence belongs to the cuticular collagen family. In terms of assembly, collagen polypeptide chains are complexed within the cuticle by disulfide bonds and other types of covalent cross-links. Syncytial dorsal and ventral epidermis.

Functionally, nematode cuticles are composed largely of collagen-like proteins. The cuticle functions both as an exoskeleton and as a barrier to protect the worm from its environment. This chain is Cuticle collagen 2 (col-2), found in Caenorhabditis elegans.